Here is a 327-residue protein sequence, read N- to C-terminus: Pantothenate kinase (327 aa).

105 to 112 (GSVAVGKS) provides a ligand contact to ATP.

Belongs to the prokaryotic pantothenate kinase family.

The protein resides in the cytoplasm. The catalysed reaction is (R)-pantothenate + ATP = (R)-4'-phosphopantothenate + ADP + H(+). The protein operates within cofactor biosynthesis; coenzyme A biosynthesis; CoA from (R)-pantothenate: step 1/5. The polypeptide is Pantothenate kinase (Cutibacterium acnes (strain DSM 16379 / KPA171202) (Propionibacterium acnes)).